The primary structure comprises 336 residues: Dihydroorotate dehydrogenase (quinone) (336 aa).

Residues 62 to 66 (AGLDK) and T86 contribute to the FMN site. K66 serves as a coordination point for substrate. 111–115 (NRMGF) serves as a coordination point for substrate. FMN is bound by residues N139 and N172. N172 contacts substrate. S175 (nucleophile) is an active-site residue. N177 contributes to the substrate binding site. FMN-binding residues include K217 and T245. 246 to 247 (NT) provides a ligand contact to substrate. Residues G268, G297, and 318-319 (YS) each bind FMN.

The protein belongs to the dihydroorotate dehydrogenase family. Type 2 subfamily. As to quaternary structure, monomer. FMN serves as cofactor.

Its subcellular location is the cell membrane. It carries out the reaction (S)-dihydroorotate + a quinone = orotate + a quinol. The protein operates within pyrimidine metabolism; UMP biosynthesis via de novo pathway; orotate from (S)-dihydroorotate (quinone route): step 1/1. In terms of biological role, catalyzes the conversion of dihydroorotate to orotate with quinone as electron acceptor. This chain is Dihydroorotate dehydrogenase (quinone), found in Aliivibrio fischeri (strain ATCC 700601 / ES114) (Vibrio fischeri).